Reading from the N-terminus, the 264-residue chain is Iodotyrosine deiodinase (264 aa).

Residues 75 to 79 (RRTVR) and 103 to 104 (SG) contribute to the FMN site. Residues alanine 105, glutamate 132, tyrosine 136, and lysine 157 each coordinate 3-iodo-L-tyrosine. FMN-binding positions include 212–214 (TST) and arginine 254.

It belongs to the nitroreductase family. Requires FMN as cofactor.

The catalysed reaction is 2 iodide + L-tyrosine + 2 NADP(+) = 3,5-diiodo-L-tyrosine + 2 NADPH + H(+). It catalyses the reaction iodide + L-tyrosine + NADP(+) = 3-iodo-L-tyrosine + NADPH. It carries out the reaction 3-iodo-L-tyrosine + iodide + NADP(+) = 3,5-diiodo-L-tyrosine + NADPH + H(+). The enzyme catalyses L-tyrosine + chloride + NADP(+) = 3-chloro-L-tyrosine + NADPH. The catalysed reaction is bromide + L-tyrosine + NADP(+) = 3-bromo-L-tyrosine + NADPH. Catalyzes the dehalogenation of halotyrosines such as 3,5-diiodo-L-tyrosine. Likely to also catalyze the dehalogenation of other halotyrosines such as 3-bromo-L-tyrosine, 3-chloro-L-tyrosine and 3-iodo-L-tyrosine. This is Iodotyrosine deiodinase from Nematostella vectensis (Starlet sea anemone).